An 854-amino-acid chain; its full sequence is Envelope glycoprotein gp150 (854 aa).

Residues 1-783 are Extracellular-facing; it reads MAEGFAANRQ…WIGNIPQYLK (783 aa). Asparagine 218, asparagine 256, asparagine 267, asparagine 272, asparagine 296, asparagine 328, asparagine 334, asparagine 340, asparagine 416, asparagine 420, asparagine 479, asparagine 497, asparagine 529, asparagine 546, and asparagine 549 each carry an N-linked (GlcNAc...) asparagine; by host glycan. Residues 614 to 634 are fusion peptide; sequence VMLALATVLSMAGAGTGATAI. A coiled-coil region spans residues 641 to 691; it reads QQVLATHQEAIEKVTEALKINNLRLVTLEHQVLVIGLKVEAMEKFLYTAFA. The immunosuppression stretch occupies residues 660–678; sequence INNLRLVTLEHQVLVIGLK. Residues asparagine 715, asparagine 719, asparagine 727, and asparagine 735 are each glycosylated (N-linked (GlcNAc...) asparagine; by host). Positions 734-770 form a coiled coil; it reads YNQTKDLQQRFYEIIMDIEQNNVQGKKGLQQLQEWED. Residues 784 to 804 form a helical membrane-spanning segment; that stretch reads GLLGGILGIGLGMLLLILCLP. Residues 805–854 are Cytoplasmic-facing; sequence TLVDCIRNCIHKILGYTVIAMPEVEEEEIQPQMELRRNGRQCGMSEKEEE.

As to quaternary structure, the mature envelope protein (Env) consists of a trimer of SU-TM heterodimers attached by noncovalent interactions or by a labile interchain disulfide bond. In terms of processing, specific enzymatic cleavages in vivo yield mature proteins. Envelope glycoproteins are synthesized as an inactive precursor that is N-glycosylated and processed likely by host cell furin or by a furin-like protease in the Golgi to yield the mature SU and TM proteins. The cleavage site between SU and TM requires the minimal sequence [KR]-X-[KR]-R.

The protein localises to the virion membrane. It is found in the host cell membrane. Its function is as follows. The surface protein (SU) attaches the virus to the host cell by binding to its receptor. This interaction triggers the refolding of the transmembrane protein (TM) and is thought to activate its fusogenic potential by unmasking its fusion peptide. Fusion occurs at the host cell plasma membrane. The transmembrane protein (TM) acts as a class I viral fusion protein. Under the current model, the protein has at least 3 conformational states: pre-fusion native state, pre-hairpin intermediate state, and post-fusion hairpin state. During viral and target cell membrane fusion, the coiled coil regions (heptad repeats) assume a trimer-of-hairpins structure, positioning the fusion peptide in close proximity to the C-terminal region of the ectodomain. The formation of this structure appears to drive apposition and subsequent fusion of viral and target cell membranes. Membranes fusion leads to delivery of the nucleocapsid into the cytoplasm. The sequence is that of Envelope glycoprotein gp150 (env) from Feline immunodeficiency virus (isolate Wo) (FIV).